Reading from the N-terminus, the 118-residue chain is Large ribosomal subunit protein bL20 (118 aa).

This sequence belongs to the bacterial ribosomal protein bL20 family.

Its function is as follows. Binds directly to 23S ribosomal RNA and is necessary for the in vitro assembly process of the 50S ribosomal subunit. It is not involved in the protein synthesizing functions of that subunit. The protein is Large ribosomal subunit protein bL20 of Francisella philomiragia subsp. philomiragia (strain ATCC 25017 / CCUG 19701 / FSC 153 / O#319-036).